The following is a 699-amino-acid chain: DNA ligase (699 aa).

The disordered stretch occupies residues methionine 1 to arginine 29. NAD(+) is bound by residues aspartate 60–aspartate 64, serine 108–isoleucine 109, and glutamate 137. Lysine 139 acts as the N6-AMP-lysine intermediate in catalysis. Residues arginine 160, glutamate 196, lysine 311, and lysine 335 each coordinate NAD(+). Residues cysteine 425, cysteine 428, cysteine 441, and cysteine 447 each coordinate Zn(2+). In terms of domain architecture, BRCT spans serine 613 to arginine 666.

This sequence belongs to the NAD-dependent DNA ligase family. LigA subfamily. Mg(2+) is required as a cofactor. Requires Mn(2+) as cofactor.

It catalyses the reaction NAD(+) + (deoxyribonucleotide)n-3'-hydroxyl + 5'-phospho-(deoxyribonucleotide)m = (deoxyribonucleotide)n+m + AMP + beta-nicotinamide D-nucleotide.. Displays maximal in vitro activity at high salt levels. Functionally, DNA ligase that catalyzes the formation of phosphodiester linkages between 5'-phosphoryl and 3'-hydroxyl groups in double-stranded DNA using NAD as a coenzyme and as the energy source for the reaction. It is essential for DNA replication and repair of damaged DNA. This chain is DNA ligase, found in Haloferax volcanii (strain ATCC 29605 / DSM 3757 / JCM 8879 / NBRC 14742 / NCIMB 2012 / VKM B-1768 / DS2) (Halobacterium volcanii).